A 392-amino-acid chain; its full sequence is DNA primase small subunit PriS (392 aa).

Residues Asp98, Asp100, and Asp295 contribute to the active site.

Belongs to the eukaryotic-type primase small subunit family. In terms of assembly, heterodimer of a small subunit (PriS) and a large subunit (PriL). It depends on Mg(2+) as a cofactor. Requires Mn(2+) as cofactor.

Functionally, catalytic subunit of DNA primase, an RNA polymerase that catalyzes the synthesis of short RNA molecules used as primers for DNA polymerase during DNA replication. The small subunit contains the primase catalytic core and has DNA synthesis activity on its own. Binding to the large subunit stabilizes and modulates the activity, increasing the rate of DNA synthesis while decreasing the length of the DNA fragments, and conferring RNA synthesis capability. The DNA polymerase activity may enable DNA primase to also catalyze primer extension after primer synthesis. May also play a role in DNA repair. The polypeptide is DNA primase small subunit PriS (Haloarcula marismortui (strain ATCC 43049 / DSM 3752 / JCM 8966 / VKM B-1809) (Halobacterium marismortui)).